A 426-amino-acid polypeptide reads, in one-letter code: NADH-quinone oxidoreductase subunit H 1 (426 aa).

Transmembrane regions (helical) follow at residues 22-42, 91-111, 124-144, 163-183, 206-226, 258-278, 299-319, 331-351, 357-377, and 392-412; these read LWAT…VMLM, FLFW…YLVI, IGVL…VMAG, MVSY…MTSL, FIFK…IAMV, LFFL…VTLW, FSVF…IGWV, AIGL…LLIP, VSDI…YIWY, and IGWK…AVLG.

Belongs to the complex I subunit 1 family. In terms of assembly, NDH-1 is composed of 14 different subunits. Subunits NuoA, H, J, K, L, M, N constitute the membrane sector of the complex.

Its subcellular location is the cell inner membrane. The catalysed reaction is a quinone + NADH + 5 H(+)(in) = a quinol + NAD(+) + 4 H(+)(out). In terms of biological role, NDH-1 shuttles electrons from NADH, via FMN and iron-sulfur (Fe-S) centers, to quinones in the respiratory chain. The immediate electron acceptor for the enzyme in this species is believed to be ubiquinone. Couples the redox reaction to proton translocation (for every two electrons transferred, four hydrogen ions are translocated across the cytoplasmic membrane), and thus conserves the redox energy in a proton gradient. This subunit may bind ubiquinone. In Koribacter versatilis (strain Ellin345), this protein is NADH-quinone oxidoreductase subunit H 1.